We begin with the raw amino-acid sequence, 207 residues long: LexA repressor (207 aa).

A DNA-binding region (H-T-H motif) is located at residues 28–47 (VREIARRFRITPRGAQLHLV). Catalysis depends on for autocatalytic cleavage activity residues Ser119 and Lys156.

Belongs to the peptidase S24 family. In terms of assembly, homodimer.

It catalyses the reaction Hydrolysis of Ala-|-Gly bond in repressor LexA.. Represses a number of genes involved in the response to DNA damage (SOS response), including recA and lexA. In the presence of single-stranded DNA, RecA interacts with LexA causing an autocatalytic cleavage which disrupts the DNA-binding part of LexA, leading to derepression of the SOS regulon and eventually DNA repair. This is LexA repressor from Thermotoga neapolitana (strain ATCC 49049 / DSM 4359 / NBRC 107923 / NS-E).